We begin with the raw amino-acid sequence, 288 residues long: tRNA pseudouridine synthase A (288 aa).

D59 serves as the catalytic Nucleophile. Residue Y134 participates in substrate binding.

The protein belongs to the tRNA pseudouridine synthase TruA family. Homodimer.

It carries out the reaction uridine(38/39/40) in tRNA = pseudouridine(38/39/40) in tRNA. Formation of pseudouridine at positions 38, 39 and 40 in the anticodon stem and loop of transfer RNAs. The protein is tRNA pseudouridine synthase A of Leifsonia xyli subsp. xyli (strain CTCB07).